The primary structure comprises 128 residues: Small ribosomal subunit protein eS8 (128 aa).

The protein belongs to the eukaryotic ribosomal protein eS8 family. In terms of assembly, part of the 30S ribosomal subunit.

This Methanococcus maripaludis (strain C5 / ATCC BAA-1333) protein is Small ribosomal subunit protein eS8.